Reading from the N-terminus, the 277-residue chain is Probable redox regulatory protein ML2435 (277 aa).

It belongs to the Rv0495c family.

Essential for maintaining intracellular redox homeostasis. In Mycobacterium leprae (strain TN), this protein is Probable redox regulatory protein ML2435.